Consider the following 611-residue polypeptide: RAC serine/threonine-protein kinase (611 aa).

The segment covering 14-25 has biased composition (low complexity); it reads VVASAPAPGSAS. Disordered stretches follow at residues 14-33 and 45-88; these read VVAS…SPTT and QSTH…NTTF. At S30 the chain carries Phosphoserine. The 106-residue stretch at 106-211 folds into the PH domain; the sequence is QVVKEGWLMK…WTEAIRNVSS (106 aa). The 258-residue stretch at 266–523 folds into the Protein kinase domain; it reads FEFLKVLGKG…VKEIQAHPFF (258 aa). ATP-binding positions include 272 to 280 and K295; that span reads LGKGTFGKV. D389 serves as the catalytic Proton acceptor. Residues 524-597 form the AGC-kinase C-terminal domain; the sequence is ASINWTDLVL…QGDMASTLGT (74 aa). S586 is subject to Phosphoserine.

The protein belongs to the protein kinase superfamily. AGC Ser/Thr protein kinase family. RAC subfamily. In terms of assembly, interacts with trbl. Post-translationally, phosphorylated and activated by Pk61C/PDK1. Phosphorylated on Ser-586 by the TORC2 complex. In terms of tissue distribution, ubiquitously expressed. Present in ovary, where it is concentrated at the basal side of follicle cells.

It localises to the cytoplasm. It is found in the cytosol. The protein resides in the cell membrane. It catalyses the reaction L-seryl-[protein] + ATP = O-phospho-L-seryl-[protein] + ADP + H(+). It carries out the reaction L-threonyl-[protein] + ATP = O-phospho-L-threonyl-[protein] + ADP + H(+). Serine/threonine kinase involved in various developmental processes. During early embryogenesis, acts as a survival protein. During mid-embryogenesis, phosphorylates and activates trh, a transcription factor required for tracheal cell fate determination. Also regulates tracheal cell migration. Later in development, acts downstream of PI3K and Pk61C/PDK1 in the insulin receptor transduction pathway which regulates cell growth and organ size, by phosphorylating and antagonizing FOXO transcription factor. Controls follicle cell size during oogenesis. May also stimulate cell growth by phosphorylating Gig/Tsc2 and inactivating the Tsc complex. Dephosphorylation of 'Ser-586' by Phlpp triggers apoptosis and suppression of tumor growth. This Drosophila melanogaster (Fruit fly) protein is RAC serine/threonine-protein kinase.